Reading from the N-terminus, the 293-residue chain is Kynurenine formamidase (293 aa).

An HGGXW motif is present at residues His-84 to Trp-88. Ser-153 functions as the Nucleophile in the catalytic mechanism. Catalysis depends on residues Asp-236 and His-268.

This sequence belongs to the kynurenine formamidase family. As to quaternary structure, homodimer.

Its subcellular location is the cytoplasm. It is found in the cytosol. The protein localises to the nucleus. The catalysed reaction is N-formyl-L-kynurenine + H2O = L-kynurenine + formate + H(+). It functions in the pathway amino-acid degradation; L-tryptophan degradation via kynurenine pathway; L-kynurenine from L-tryptophan: step 2/2. Catalyzes the hydrolysis of N-formyl-L-kynurenine to L-kynurenine, the second step in the kynurenine pathway of tryptophan degradation. Kynurenine may be further oxidized to nicotinic acid, NAD(H) and NADP(H). Required for elimination of toxic metabolites. This is Kynurenine formamidase (afmid) from Danio rerio (Zebrafish).